The primary structure comprises 274 residues: 2,3,4,5-tetrahydropyridine-2,6-dicarboxylate N-succinyltransferase (274 aa).

Substrate is bound by residues R104 and D141.

Belongs to the transferase hexapeptide repeat family. Homotrimer.

The protein resides in the cytoplasm. The enzyme catalyses (S)-2,3,4,5-tetrahydrodipicolinate + succinyl-CoA + H2O = (S)-2-succinylamino-6-oxoheptanedioate + CoA. Its pathway is amino-acid biosynthesis; L-lysine biosynthesis via DAP pathway; LL-2,6-diaminopimelate from (S)-tetrahydrodipicolinate (succinylase route): step 1/3. The polypeptide is 2,3,4,5-tetrahydropyridine-2,6-dicarboxylate N-succinyltransferase (Escherichia coli O127:H6 (strain E2348/69 / EPEC)).